The following is a 119-amino-acid chain: Large ribosomal subunit protein bL20 (119 aa).

This sequence belongs to the bacterial ribosomal protein bL20 family.

Functionally, binds directly to 23S ribosomal RNA and is necessary for the in vitro assembly process of the 50S ribosomal subunit. It is not involved in the protein synthesizing functions of that subunit. The polypeptide is Large ribosomal subunit protein bL20 (Bordetella bronchiseptica (strain ATCC BAA-588 / NCTC 13252 / RB50) (Alcaligenes bronchisepticus)).